The chain runs to 221 residues: MPAKLGYWKIRGLQQPVRLLLEYGEKYEEQIYERDDGEKWFSKKFELGLDLPNLPYYIDDKCKLTQSLAILRYIADKHGMIGSTPEERARVSMIEGAAVDLRQGLSRISYDPKFEQLKEGYLKDLPTTMKMWSDFLGKNPYLRGTSVSHVDFMVYEALDAIRYLEPHCLDHFPNLQQFMSRIEALPSIKAYMESNRFIKWPLNGWHAQFGGGDAPPSHEKK.

The GST N-terminal domain maps to 2-82; it reads PAKLGYWKIR…YIADKHGMIG (81 aa). Residues 7–8, 40–44, 53–54, and 66–67 each bind glutathione; these read YW, WFSKK, NL, and QS. The GST C-terminal domain occupies 84–202; the sequence is TPEERARVSM…ESNRFIKWPL (119 aa). Position 110 (Tyr-110) interacts with substrate.

This sequence belongs to the GST superfamily. Mu family. Homodimer.

The catalysed reaction is RX + glutathione = an S-substituted glutathione + a halide anion + H(+). Functionally, conjugation of reduced glutathione to a wide number of exogenous and endogenous hydrophobic electrophiles. GST isoenzymes appear to play a central role in the parasite detoxification system. Other functions are also suspected including a role in increasing the solubility of haematin in the parasite gut. The chain is Glutathione S-transferase class-mu 26 kDa isozyme 1 from Fasciola hepatica (Liver fluke).